The sequence spans 474 residues: Transmembrane transporter FVEG_12640 (474 aa).

The segment covering 1–15 (MASPTISSMEQYTPS) has biased composition (polar residues). Positions 1–39 (MASPTISSMEQYTPSSKDEKIVPLHGDAAGSDTEKGESR) are disordered. The next 10 membrane-spanning stretches (helical) occupy residues 72–92 (ILAI…LCIV), 133–153 (LVGV…IVTS), 164–184 (GTCT…FSSI), 192–212 (WLTW…VVAV), 231–251 (WAPI…NIFI), 275–295 (ACLV…LVIY), 317–337 (VAYG…QHVA), 364–384 (LGIN…VPIL), 387–407 (LLGL…PALL), and 431–451 (LIMI…AVLI).

It belongs to the amino acid/polyamine transporter 2 family.

The protein resides in the membrane. Functionally, transmembrane transporter; part of the Fusarium detoxification of benzoxazolinone cluster 2 (FDB2) involved in the degradation of benzoxazolinones produced by the host plant. Maize, wheat, and rye produce the 2 benzoxazinone phytoanticipins 2,4-dihy-droxy-7-methoxy-1,4-benzoxazin-3-one (DIMBOA) and 2,4-dihydroxy-1,4-benzoxazin-3-one (DIBOA) that, due to their inherent instability once released, spontaneously degrade to the more stable corresponding benzoxazolinones, 6-methoxy-2-benzoxazolinone (MBOA) and 2-benzoxazolinone (BOA), respectively. Might be involved in the transport of metabolites of benzoxazolinone degradation. The protein is Transmembrane transporter FVEG_12640 of Gibberella moniliformis (strain M3125 / FGSC 7600) (Maize ear and stalk rot fungus).